The chain runs to 394 residues: Probable purine permease 8 (394 aa).

Transmembrane regions (helical) follow at residues 45-65 (WLRISIYVFFVLACQALSTIL), 77-97 (TWMGTLVQLIGFPVLFLFRFF), 113-133 (FSSFTILGSVYIVTGLLVSAN), 139-159 (VGLLYLPVSTFSLILASQLAF), 172-192 (FTPFIVNSLFLLTISSALLVV), 208-228 (VIGIICTIGASAGIGLLLSLV), 247-267 (LVAYQSLVASCVVLIGLFASG), 289-309 (TLASIAISWQVYTIGVVGLIF), 315-335 (FSNSITAVGLPIVPVVAVIVF), and 344-364 (IFSIILAIWGFISFVYQHYLD). A disordered region spans residues 373-394 (TSPVGDPHLLPAEEGHTNIHSV). The span at 383–394 (PAEEGHTNIHSV) shows a compositional bias: basic and acidic residues.

This sequence belongs to the purine permeases (TC 2.A.7.14) family.

The protein resides in the membrane. This chain is Probable purine permease 8 (PUP8), found in Arabidopsis thaliana (Mouse-ear cress).